The primary structure comprises 216 residues: MNYTVDDQNMAFISQLYPDVYTQIVQPGEVKQPKRRRKKTKGSVASADGGNGLFRKRKLTDEQVNMLEMSFGDEHKLESERKDRLAAELGLDPRQVAVWFQNRRARWKNKRLEEEYNKLKNSHDNVVVDKCRLESEVIQLKEQLYDAEREIQRLAERVEGGSSNSPISSSVSVEANETPFFGDYKVGDDGDDYDHLFYPVPENSYIDEAEWMSLYI.

The tract at residues 28–52 (GEVKQPKRRRKKTKGSVASADGGNG) is disordered. The segment at residues 52-111 (GLFRKRKLTDEQVNMLEMSFGDEHKLESERKDRLAAELGLDPRQVAVWFQNRRARWKNKR) is a DNA-binding region (homeobox). The segment at 112-140 (LEEEYNKLKNSHDNVVVDKCRLESEVIQL) is leucine-zipper.

The protein belongs to the HD-ZIP homeobox family. Class I subfamily. Expressed in roots, flowers and siliques.

It localises to the nucleus. In terms of biological role, probable transcription factor. The polypeptide is Homeobox-leucine zipper protein ATHB-40 (ATHB-40) (Arabidopsis thaliana (Mouse-ear cress)).